A 366-amino-acid chain; its full sequence is D-alanine--D-alanine ligase (366 aa).

The ATP-grasp domain maps to 140 to 346 (KALFAQSDLP…YGELLSRLVD (207 aa)). Residue 173–228 (EDRLGYPCFVKPANMGSSVGISKATNRAELVAAFDDAVRYDRKLIVEKGINVREIE) coordinates ATP. Mg(2+)-binding residues include D299, E313, and N315.

This sequence belongs to the D-alanine--D-alanine ligase family. Mg(2+) is required as a cofactor. Requires Mn(2+) as cofactor.

The protein resides in the cytoplasm. It catalyses the reaction 2 D-alanine + ATP = D-alanyl-D-alanine + ADP + phosphate + H(+). It functions in the pathway cell wall biogenesis; peptidoglycan biosynthesis. Its function is as follows. Cell wall formation. This is D-alanine--D-alanine ligase from Heliobacterium modesticaldum (strain ATCC 51547 / Ice1).